A 92-amino-acid chain; its full sequence is Phosphoribosyl-ATP pyrophosphatase (92 aa).

It belongs to the PRA-PH family.

The protein localises to the cytoplasm. The enzyme catalyses 1-(5-phospho-beta-D-ribosyl)-ATP + H2O = 1-(5-phospho-beta-D-ribosyl)-5'-AMP + diphosphate + H(+). It participates in amino-acid biosynthesis; L-histidine biosynthesis; L-histidine from 5-phospho-alpha-D-ribose 1-diphosphate: step 2/9. This chain is Phosphoribosyl-ATP pyrophosphatase, found in Leptospira borgpetersenii serovar Hardjo-bovis (strain JB197).